The following is a 576-amino-acid chain: V-type ATP synthase alpha chain (576 aa).

238–245 (GPFGAGKT) is an ATP binding site.

This sequence belongs to the ATPase alpha/beta chains family.

The catalysed reaction is ATP + H2O + 4 H(+)(in) = ADP + phosphate + 5 H(+)(out). Its function is as follows. Produces ATP from ADP in the presence of a proton gradient across the membrane. The V-type alpha chain is a catalytic subunit. The sequence is that of V-type ATP synthase alpha chain from Borrelia turicatae (strain 91E135).